We begin with the raw amino-acid sequence, 130 residues long: Histone H2A type 1 (130 aa).

The interval 1–22 (MSGRGKQGGKARAKAKSRSSRA) is disordered. An N-acetylserine modification is found at S2. Position 2 is a phosphoserine; by RPS6KA5 (S2). A Citrulline; alternate modification is found at R4. R4 bears the Symmetric dimethylarginine; by PRMT5; alternate mark. K6 bears the N6-(2-hydroxyisobutyryl)lysine mark. The span at 7-19 (QGGKARAKAKSRS) shows a compositional bias: basic residues. At K10 the chain carries N6-(2-hydroxyisobutyryl)lysine; alternate. An N6-lactoyllysine; alternate modification is found at K10. Residue K10 is modified to N6-succinyllysine; alternate. Residues K14 and K16 each participate in a glycyl lysine isopeptide (Lys-Gly) (interchain with G-Cter in ubiquitin) cross-link. K37 bears the N6-(2-hydroxyisobutyryl)lysine; alternate mark. K37 carries the N6-(beta-hydroxybutyryl)lysine; alternate modification. K37 carries the N6-crotonyllysine; alternate modification. Residues K75 and K76 each carry the N6-(2-hydroxyisobutyryl)lysine modification. Position 96 is an N6-(2-hydroxyisobutyryl)lysine; alternate (K96). N6-succinyllysine; alternate is present on K96. An N6-glutaryllysine; alternate modification is found at K96. K100 bears the N6-glutaryllysine mark. An N5-methylglutamine modification is found at Q105. K119 carries the N6-(2-hydroxyisobutyryl)lysine; alternate modification. N6-crotonyllysine; alternate occurs at positions 119 and 120. Residues K119 and K120 each carry the N6-glutaryllysine; alternate modification. Residue K120 forms a Glycyl lysine isopeptide (Lys-Gly) (interchain with G-Cter in ubiquitin); alternate linkage. T121 is modified (phosphothreonine; by DCAF1). K126 carries the N6-crotonyllysine; alternate modification. Position 126 is an N6-glutaryllysine; alternate (K126).

Belongs to the histone H2A family. The nucleosome is a histone octamer containing two molecules each of H2A, H2B, H3 and H4 assembled in one H3-H4 heterotetramer and two H2A-H2B heterodimers. The octamer wraps approximately 147 bp of DNA. Interacts with VRK1; the interaction is mediated by the nucleosome acidic patch, a cluster of negatively charged residues of H2A and H2B forming a cleft within the nucleosome core. Deiminated on Arg-4 in granulocytes upon calcium entry. Post-translationally, monoubiquitination of Lys-120 (H2AK119Ub) by RING1, TRIM37 and RNF2/RING2 complex gives a specific tag for epigenetic transcriptional repression and participates in X chromosome inactivation of female mammals. It is involved in the initiation of both imprinted and random X inactivation. Ubiquitinated H2A is enriched in inactive X chromosome chromatin. Ubiquitination of H2A functions downstream of methylation of 'Lys-27' of histone H3 (H3K27me). H2AK119Ub by RNF2/RING2 can also be induced by ultraviolet and may be involved in DNA repair. Following DNA double-strand breaks (DSBs), it is ubiquitinated through 'Lys-63' linkage of ubiquitin moieties by the E2 ligase UBE2N and the E3 ligases RNF8 and RNF168, leading to the recruitment of repair proteins to sites of DNA damage. Ubiquitination at Lys-14 and Lys-16 (H2AK13Ub and H2AK15Ub, respectively) in response to DNA damage is initiated by RNF168 that mediates monoubiquitination at these 2 sites, and 'Lys-63'-linked ubiquitin are then conjugated to monoubiquitin; RNF8 is able to extend 'Lys-63'-linked ubiquitin chains in vitro. H2AK119Ub and ionizing radiation-induced 'Lys-63'-linked ubiquitination (H2AK13Ub and H2AK15Ub) are distinct events. In terms of processing, phosphorylation on Ser-2 (H2AS1ph) is enhanced during mitosis. Phosphorylation on Ser-2 by RPS6KA5/MSK1 directly represses transcription. Acetylation of H3 inhibits Ser-2 phosphorylation by RPS6KA5/MSK1. Phosphorylation at Thr-121 (H2AT120ph) by DCAF1 is present in the regulatory region of many tumor suppresor genes and down-regulates their transcription. Symmetric dimethylation on Arg-4 by the PRDM1/PRMT5 complex may play a crucial role in the germ-cell lineage. Post-translationally, glutamine methylation at Gln-105 (H2AQ104me) by FBL is specifically dedicated to polymerase I. It is present at 35S ribosomal DNA locus and impairs binding of the FACT complex. In terms of processing, crotonylation (Kcr) is specifically present in male germ cells and marks testis-specific genes in post-meiotic cells, including X-linked genes that escape sex chromosome inactivation in haploid cells. Crotonylation marks active promoters and enhancers and confers resistance to transcriptional repressors. It is also associated with post-meiotically activated genes on autosomes. Lactylated in macrophages by EP300/P300 by using lactoyl-CoA directly derived from endogenous or exogenous lactate, leading to stimulates gene transcription.

It is found in the nucleus. The protein localises to the chromosome. Functionally, core component of nucleosome. Nucleosomes wrap and compact DNA into chromatin, limiting DNA accessibility to the cellular machineries which require DNA as a template. Histones thereby play a central role in transcription regulation, DNA repair, DNA replication and chromosomal stability. DNA accessibility is regulated via a complex set of post-translational modifications of histones, also called histone code, and nucleosome remodeling. This Rattus norvegicus (Rat) protein is Histone H2A type 1.